The sequence spans 519 residues: Serine/threonine-protein kinase RIO3 (519 aa).

A phosphoserine mark is found at serine 8, serine 112, serine 125, serine 127, and serine 128. The tract at residues 122 to 159 (FEDSDSSEDEVDWQDTRDDPYRPAKPIPTPKKGFIGKG) is disordered. A compositionally biased stretch (acidic residues) spans 124-134 (DSDSSEDEVDW). The Protein kinase domain occupies 251-519 (ETITGCISTG…DGSPPVLSAD (269 aa)). ATP-binding positions include 257–265 (ISTGKESVV) and lysine 290. Aspartate 406 functions as the Proton acceptor in the catalytic mechanism. Serine 512 is subject to Phosphoserine.

This sequence belongs to the protein kinase superfamily. RIO-type Ser/Thr kinase family. Interacts with CASP10. Interacts with IRF3; RIOK3 probably mediates the interaction of TBK1 with IRF3. Associated with 40S pre-ribosomal particles. It depends on Mg(2+) as a cofactor. Post-translationally, autophosphorylated (in vitro).

It is found in the cytoplasm. It carries out the reaction L-seryl-[protein] + ATP = O-phospho-L-seryl-[protein] + ADP + H(+). It catalyses the reaction L-threonyl-[protein] + ATP = O-phospho-L-threonyl-[protein] + ADP + H(+). Its function is as follows. Involved in regulation of type I interferon (IFN)-dependent immune response which plays a critical role in the innate immune response against DNA and RNA viruses. May act as an adapter protein essential for the recruitment of TBK1 to IRF3. Phosphorylates IFIH1 on 'Ser-828' interfering with IFIH1 filament assembly on long dsRNA and resulting in attenuated IFIH1-signaling. Can inhibit CASP10 isoform 7-mediated activation of the NF-kappaB signaling pathway. May play a role in the biogenesis of the 40S ribosomal subunit. Involved in the processing of 21S pre-rRNA to the mature 18S rRNA. This chain is Serine/threonine-protein kinase RIO3 (Riok3), found in Mus musculus (Mouse).